The primary structure comprises 238 residues: U2 small nuclear ribonucleoprotein A' (238 aa).

LRR repeat units lie at residues 53–74, 75–95, and 97–118; these read PTHILDLTNNDLIMIPDLSRRD, DIHTLLLGRNNIVEVDGRLLP, and NVQNLTLSNNSIRRFEDLQRLR. One can recognise an LRRCT domain in the interval 132–170; it reads NQVCHLANYREHVLRLVPHLETLDFQNVTAEERKSAMSF. Positions 167–189 are disordered; it reads AMSFPRQADGDTLGPVNTAIRDN.

Belongs to the U2 small nuclear ribonucleoprotein A family. In terms of assembly, belongs to the CWC complex (or CEF1-associated complex), a spliceosome sub-complex reminiscent of a late-stage spliceosome composed of the U2, U5 and U6 snRNAs and at least BUD13, BUD31, BRR2, CDC40, CEF1, CLF1, CUS1, CWC2, CWC15, CWC21, CWC22, CWC23, CWC24, CWC25, CWC27, ECM2, HSH155, IST3, ISY1, LEA1, MSL1, NTC20, PRP8, PRP9, PRP11, PRP19, PRP21, PRP22, PRP45, PRP46, SLU7, SMB1, SMD1, SMD2, SMD3, SMX2, SMX3, SNT309, SNU114, SPP2, SYF1, SYF2, RSE1 and YJU2. Interacts with MSL1.

It is found in the nucleus. Its function is as follows. Involved in pre-mRNA splicing. Associates to U2 snRNA in a MSL1 dependent manner and is required for normal accumulation of U2 snRNA. Required for the spliceosome assembly and the efficient addition of U2 snRNP onto the pre-mRNA. The sequence is that of U2 small nuclear ribonucleoprotein A' (LEA1) from Saccharomyces cerevisiae (strain ATCC 204508 / S288c) (Baker's yeast).